A 428-amino-acid chain; its full sequence is Glutamate-1-semialdehyde 2,1-aminomutase (428 aa).

N6-(pyridoxal phosphate)lysine is present on Lys265.

This sequence belongs to the class-III pyridoxal-phosphate-dependent aminotransferase family. HemL subfamily. Homodimer. It depends on pyridoxal 5'-phosphate as a cofactor.

It localises to the cytoplasm. The catalysed reaction is (S)-4-amino-5-oxopentanoate = 5-aminolevulinate. It functions in the pathway porphyrin-containing compound metabolism; protoporphyrin-IX biosynthesis; 5-aminolevulinate from L-glutamyl-tRNA(Glu): step 2/2. The polypeptide is Glutamate-1-semialdehyde 2,1-aminomutase (Shewanella frigidimarina (strain NCIMB 400)).